A 567-amino-acid polypeptide reads, in one-letter code: MKTISRQAYADMFGPTTGDRLRLADTELFLEIEKDFTTYGEEVKFGGGKVIRDGMGQSQVVSAECVDVLITNAIILDYWGIVKADIGIKDGRIVGIGKAGNPDVQPNVDIVIGPGTEVVAGEGKIVTAGGIDTHIHFICPQQAQEGLVSGVTTFIGGGTGPVAGTNATTVTPGIWNMYRMLEAVDELPINVGLFGKGCVSQPEAIREQITAGAIGLKIHEDWGATPMAIHNCLNVADEMDVQVAIHSDTLNEGGFYEETVKAIAGRVIHVFHTEGAGGGHAPDVIKSVGEPNILPASTNPTMPYTINTVDEHLDMLMVCHHLDPSIPEDVAFAESRIRRETIAAEDILHDMGAISVMSSDSQAMGRVGEVILRTWQCAHKMKLQRGTLAGDSADNDNNRIKRYIAKYTINPALAHGIAHTVGSIEKGKLADIVLWDPAFFGVKPALIIKGGMVAYAPMGDINAAIPTPQPVHYRPMYACLGKAKYQTSMIFMSKAGIEAGVPEKLGLKSLIGRVEGCRHITKASMIHNNYVPHIELDPQTYIVKADGVPLVCEPATELPMAQRYFLF.

The region spanning 129–567 (GGIDTHIHFI…LPMAQRYFLF (439 aa)) is the Urease domain. His134, His136, and Lys217 together coordinate Ni(2+). Lys217 carries the N6-carboxylysine modification. Substrate is bound at residue His219. His246 and His272 together coordinate Ni(2+). His320 (proton donor) is an active-site residue. Asp360 contributes to the Ni(2+) binding site.

It belongs to the metallo-dependent hydrolases superfamily. Urease alpha subunit family. Probable heterotrimer of UreA (gamma), UreB (beta) and UreC (alpha) subunits. Three heterotrimers associate to form the active enzyme. The trimeric urease interacts with an accessory complex composed of UreD, UreF and UreG, which is required for the assembly of the nickel containing metallocenter of UreC. The UreE protein may also play a direct role in nickel transfer to the urease apoprotein. Ni cation serves as cofactor. In terms of processing, carboxylation allows a single lysine to coordinate two nickel ions.

It localises to the cytoplasm. It catalyses the reaction urea + 2 H2O + H(+) = hydrogencarbonate + 2 NH4(+). Its pathway is nitrogen metabolism; urea degradation; CO(2) and NH(3) from urea (urease route): step 1/1. The sequence is that of Urease subunit alpha from Proteus mirabilis (strain HI4320).